The chain runs to 147 residues: Cyanate hydratase (147 aa).

Residues Arg88, Glu91, and Ser114 contribute to the active site.

The protein belongs to the cyanase family.

It carries out the reaction cyanate + hydrogencarbonate + 3 H(+) = NH4(+) + 2 CO2. In terms of biological role, catalyzes the reaction of cyanate with bicarbonate to produce ammonia and carbon dioxide. In Polaromonas sp. (strain JS666 / ATCC BAA-500), this protein is Cyanate hydratase.